Here is a 343-residue protein sequence, read N- to C-terminus: Major histocompatibility complex class I-related protein 1 (343 aa).

Positions 1–18 (MMFLLPFLTVFLAKQSHT) are cleaved as a signal peptide. The tract at residues 19 to 105 (RTHSLRYFRL…RHLQRHYNHS (87 aa)) is alpha-1. An antigen-binding cleft region spans residues 19 to 197 (RTHSLRYFRL…EYGSDALERT (179 aa)). Over 19–298 (RTHSLRYFRL…QESGNTLLVA (280 aa)) the chain is Extracellular. Positions 25 and 27 each coordinate 8-(9H-purin-6-yl)-2-oxa-8-azabicyclo[3.3.1]nona-3,6-diene-4,6-dicarbaldehyde. 5-(2-oxoethylideneamino)-6-(D-ribitylamino)uracil-binding residues include Arg27, Ser42, and Lys61. 5-(2-oxopropylideneamino)-6-(D-ribitylamino)uracil is bound by residues Arg27, Ser42, and Lys61. Arg27, Ser42, and Lys61 together coordinate 7-hydroxy-6-methyl-8-(1-D-ribityl)lumazine. 8-(9H-purin-6-yl)-2-oxa-8-azabicyclo[3.3.1]nona-3,6-diene-4,6-dicarbaldehyde-binding residues include Lys61 and His76. Residue Lys61 participates in 2-amino-4-oxopteridine-6-carbaldehyde binding. Lys61 contributes to the pyridoxal binding site. Residue Asn103 is glycosylated (N-linked (GlcNAc...) asparagine). The alpha-2 stretch occupies residues 106–197 (GLHTYQRMIG…EYGSDALERT (92 aa)). Residue Arg112 participates in 8-(9H-purin-6-yl)-2-oxa-8-azabicyclo[3.3.1]nona-3,6-diene-4,6-dicarbaldehyde binding. 3 residues coordinate 5-(2-oxoethylideneamino)-6-(D-ribitylamino)uracil: Arg112, Tyr170, and Gln171. Arg112, Tyr170, and Gln171 together coordinate 5-(2-oxopropylideneamino)-6-(D-ribitylamino)uracil. Residues Arg112, Tyr170, and Gln171 each contribute to the 7-hydroxy-6-methyl-8-(1-D-ribityl)lumazine site. Cystine bridges form between Cys116/Cys179 and Cys218/Cys274. The segment at 198–289 (EHPVVRTTRK…GLQMVLEAPQ (92 aa)) is alpha-3. The region spanning 200–302 (PVVRTTRKET…NTLLVANTIS (103 aa)) is the Ig-like C1-type domain. The connecting peptide stretch occupies residues 290–298 (ESGNTLLVA). Residues 299–319 (NTISGTIILIIVLAGVGALIW) form a helical membrane-spanning segment. Residues 320–343 (RRRSREPKEVMYQPTQVNEGSSPS) lie on the Cytoplasmic side of the membrane.

Heterotrimer that consists of MR1, B2M and metabolite antigen. Major classes of metabolite ligands presented by MR1 include riboflavin-related antigens, pyrimidines and ribityl lumazines, nucleobase adducts and folate derivatives. Forms reversible covalent Schiff base complexes with microbial pyrimidine-based metabolite, which serves as a molecular switch triggering complete folding, stable association with B2M and translocation of the ternary complex from endoplasmic reticulum to the plasma membrane. Alternatively, forms non-Schiff base complexes with ribityl lumazines. On antigen-presenting cells, the ternary complex interacts with TCR on MR1-restricted T cells. Interacts with TAPBP and TAPBPL chaperones in the endoplasmic reticulum. TAPBP associated or not with MHC class I peptide loading complex binds ligand-free MR1 or MR1-B2M complex, providing for stable MR1 pools ready for metabolite antigen processing. TAPBPL interacts with MR1 in a ligand-independent way; this interaction may stabilize MR1 pool and facilitate ligand loading and dissociation. Structurally, MR1-B2M heterodimer adopts a topology similar to classical MHC class I molecules, with alpha-1 and alpha-2 domains of MR1 forming the antigen-binding cleft composed of two alpha-helices resting on a floor of 7-stranded anti-parallel beta-pleated sheet. MR1-B2M heterodimer (via alpha-helices) interacts with TCR (via CDR domains). In terms of processing, N-glycosylated. As to expression, expressed in kidney, liver, testis, spleen, thymus, brain, and heart.

The protein localises to the cell membrane. The protein resides in the endoplasmic reticulum membrane. Its subcellular location is the golgi apparatus membrane. It is found in the early endosome membrane. It localises to the late endosome membrane. Functionally, antigen-presenting molecule specialized in displaying microbial pyrimidine-based metabolites to alpha-beta T cell receptors (TCR) on innate-type mucosal-associated invariant T (MAIT) cells. In complex with B2M preferentially presents riboflavin-derived metabolites to semi-invariant TCRs on MAIT cells, guiding immune surveillance of the microbial metabolome at mucosal epithelial barriers. Signature pyrimidine-based microbial antigens are generated via non-enzymatic condensation of metabolite intermediates of the riboflavin pathway with by-products arising from other metabolic pathways such as glycolysis. Typical potent antigenic metabolites are 5-(2-oxoethylideneamino)-6-D-ribitylaminouracil (5-OE-RU) and 5-(2-oxopropylideneamino)-6-D-ribitylaminouracil (5-OP-RU), products of condensation of 5-amino-6-D-ribityaminouracil (5-A-RU) with glyoxal or methylglyoxal by-products, respectively. May present microbial antigens to various MAIT cell subsets, providing for unique recognition of diverse microbes, including pathogens that do not synthesize riboflavin. Upon antigen recognition, elicits rapid innate-type MAIT cell activation to eliminate pathogenic microbes by directly killing infected cells. During T cell development, drives thymic selection and post-thymic terminal differentiation of MAIT cells in a process dependent on commensal microflora. Acts as an immune sensor of cancer cell metabolome. May present a tumor-specific or -associated metabolite essential for cancer cell survival to a pan-cancer TCR on a non-MAIT CD8-positive T cell clone, triggering T cell-mediated killing of a wide range of cancer cell types. May present tumor-enriched pyridoxal and pyridoxal 5'-phosphate antigens, enabling preferential recognition of cancer cells. Presents nucleobase carbonyl adducts generated during oxidative stress. Captures M3Ade, a nucleobase adduct composed of one adenine modified by a malondialdehyde trimer, for recognition by MR1-restricted T cell clones expressing a polyclonal TCR repertoire. The polypeptide is Major histocompatibility complex class I-related protein 1 (Rattus norvegicus (Rat)).